The chain runs to 419 residues: UDP-N-acetylglucosamine 1-carboxyvinyltransferase (419 aa).

22–23 (KN) provides a ligand contact to phosphoenolpyruvate. Arginine 95 contributes to the UDP-N-acetyl-alpha-D-glucosamine binding site. The Proton donor role is filled by cysteine 119. Cysteine 119 carries the post-translational modification 2-(S-cysteinyl)pyruvic acid O-phosphothioketal. UDP-N-acetyl-alpha-D-glucosamine is bound by residues 164-167 (KVSV), aspartate 308, and isoleucine 330.

This sequence belongs to the EPSP synthase family. MurA subfamily.

The protein resides in the cytoplasm. The enzyme catalyses phosphoenolpyruvate + UDP-N-acetyl-alpha-D-glucosamine = UDP-N-acetyl-3-O-(1-carboxyvinyl)-alpha-D-glucosamine + phosphate. Its pathway is cell wall biogenesis; peptidoglycan biosynthesis. Cell wall formation. Adds enolpyruvyl to UDP-N-acetylglucosamine. The polypeptide is UDP-N-acetylglucosamine 1-carboxyvinyltransferase (Rickettsia prowazekii (strain Madrid E)).